The chain runs to 133 residues: Transcription antitermination protein NusB (133 aa).

This sequence belongs to the NusB family.

In terms of biological role, involved in transcription antitermination. Required for transcription of ribosomal RNA (rRNA) genes. Binds specifically to the boxA antiterminator sequence of the ribosomal RNA (rrn) operons. This is Transcription antitermination protein NusB from Shouchella clausii (strain KSM-K16) (Alkalihalobacillus clausii).